A 327-amino-acid polypeptide reads, in one-letter code: Xylosidase/arabinosidase 43A (327 aa).

Asp12 functions as the Proton acceptor in the catalytic mechanism. Glu228 (proton donor) is an active-site residue.

Belongs to the glycosyl hydrolase 43 family.

It localises to the secreted. It carries out the reaction Hydrolysis of (1-&gt;4)-beta-D-xylans, to remove successive D-xylose residues from the non-reducing termini.. The enzyme catalyses Hydrolysis of terminal non-reducing alpha-L-arabinofuranoside residues in alpha-L-arabinosides.. With respect to regulation, activity is inhibited by Ag(+), Li(+), Pb(2+), Cu(2+), Cr(3+), Co(3+), Fe(3+), Ni(2+), Mg(2+), Zn(2+), EDTA and SDS; but not by Mn(2+), Ca(2+) and beta-mercaptoethanol. Its function is as follows. Bifunctional beta-xylosidase/alpha-L-arabinosidases with a low level of xylanase activity. Is most active on 4-nitrophenyl beta-D-xylopyranoside (pNPX) (defined as 100%), moderate on p-nitrophenyl-alpha-L-arabinofuranoside (pNPA) (23.7%), and weak on beechwood xylan (15.9%) and birchwood xylan (15.2%). Is able to attack xylooligosacchardies with degrees of polymerisation of 2-5, releasing the amounts of reducing sugars in the order of xylopentose &gt; xylotetraose &gt; xylotriose &gt; xylobiose, i.e. the rate of xylose released from xylooligosacchardies increased with the chain length. No activity is detected in the presence of carboxymethyl cellulose-sodium (CMC-Na), sugar beet arabinan, AZCL-arabinan (debranched), 4-nitrophenyl a-D - galactopyranoside, 2-nitrophenyl beta-D-galactopyranoside, and 4-nitrophenyl alpha-D-glucopyranoside. This is Xylosidase/arabinosidase 43A from Humicola insolens (Soft-rot fungus).